The following is a 515-amino-acid chain: Maturase K (515 aa).

It belongs to the intron maturase 2 family. MatK subfamily.

It is found in the plastid. It localises to the chloroplast. Its function is as follows. Usually encoded in the trnK tRNA gene intron. Probably assists in splicing its own and other chloroplast group II introns. The polypeptide is Maturase K (Pinus leiophylla (Chihuahua pine)).